The sequence spans 762 residues: 5-methyltetrahydropteroyltriglutamate--homocysteine methyltransferase (762 aa).

5-methyltetrahydropteroyltri-L-glutamate contacts are provided by residues 16–19 (RELK) and K117. L-homocysteine contacts are provided by residues 438 to 440 (IGS) and E491. Residues 438-440 (IGS) and E491 each bind L-methionine. Residues 522–523 (RC) and W568 each bind 5-methyltetrahydropteroyltri-L-glutamate. D606 lines the L-homocysteine pocket. D606 contacts L-methionine. Position 612 (E612) interacts with 5-methyltetrahydropteroyltri-L-glutamate. Residues H648, C650, and E672 each contribute to the Zn(2+) site. H701 (proton donor) is an active-site residue. C733 serves as a coordination point for Zn(2+).

It belongs to the vitamin-B12 independent methionine synthase family. Requires Zn(2+) as cofactor.

It catalyses the reaction 5-methyltetrahydropteroyltri-L-glutamate + L-homocysteine = tetrahydropteroyltri-L-glutamate + L-methionine. The protein operates within amino-acid biosynthesis; L-methionine biosynthesis via de novo pathway; L-methionine from L-homocysteine (MetE route): step 1/1. Its function is as follows. Catalyzes the transfer of a methyl group from 5-methyltetrahydrofolate to homocysteine resulting in methionine formation. This is 5-methyltetrahydropteroyltriglutamate--homocysteine methyltransferase from Pseudomonas fluorescens (strain ATCC BAA-477 / NRRL B-23932 / Pf-5).